Here is a 245-residue protein sequence, read N- to C-terminus: Folate receptor gamma (245 aa).

An N-terminal signal peptide occupies residues 1 to 22; the sequence is MDMAWQMMQLLLLALVTAAGSA. Intrachain disulfides connect C37–C65, C57–C105, C66–C109, C89–C175, C96–C146, C135–C209, C139–C189, and C152–C169. Positions 103 and 107 each coordinate folate. The N-linked (GlcNAc...) asparagine glycan is linked to N121. Folate is bound by residues 124–128, 157–162, and S196; these read WRKER and HKGWNW. N161 is a glycosylation site (N-linked (GlcNAc...) asparagine). Residue N201 is glycosylated (N-linked (GlcNAc...) asparagine).

Belongs to the folate receptor family. As to expression, spleen, thymus, bone marrow, ovarian carcinoma, and uterine carcinoma.

It is found in the secreted. In terms of biological role, binds to folate and reduced folic acid derivatives and mediates delivery of 5-methyltetrahydrofolate to the interior of cells. Isoform Short does not bind folate. This is Folate receptor gamma (FOLR3) from Homo sapiens (Human).